Consider the following 378-residue polypeptide: Ribosomal RNA large subunit methyltransferase G (378 aa).

Belongs to the methyltransferase superfamily. RlmG family.

The protein localises to the cytoplasm. It carries out the reaction guanosine(1835) in 23S rRNA + S-adenosyl-L-methionine = N(2)-methylguanosine(1835) in 23S rRNA + S-adenosyl-L-homocysteine + H(+). Its function is as follows. Specifically methylates the guanine in position 1835 (m2G1835) of 23S rRNA. The protein is Ribosomal RNA large subunit methyltransferase G of Citrobacter koseri (strain ATCC BAA-895 / CDC 4225-83 / SGSC4696).